We begin with the raw amino-acid sequence, 84 residues long: Exodeoxyribonuclease 7 small subunit (84 aa).

This sequence belongs to the XseB family. In terms of assembly, heterooligomer composed of large and small subunits.

The protein localises to the cytoplasm. The enzyme catalyses Exonucleolytic cleavage in either 5'- to 3'- or 3'- to 5'-direction to yield nucleoside 5'-phosphates.. Its function is as follows. Bidirectionally degrades single-stranded DNA into large acid-insoluble oligonucleotides, which are then degraded further into small acid-soluble oligonucleotides. This chain is Exodeoxyribonuclease 7 small subunit, found in Bacillus velezensis (strain DSM 23117 / BGSC 10A6 / LMG 26770 / FZB42) (Bacillus amyloliquefaciens subsp. plantarum).